The chain runs to 219 residues: Probable nicotinate-nucleotide adenylyltransferase (219 aa).

It belongs to the NadD family.

It carries out the reaction nicotinate beta-D-ribonucleotide + ATP + H(+) = deamido-NAD(+) + diphosphate. It functions in the pathway cofactor biosynthesis; NAD(+) biosynthesis; deamido-NAD(+) from nicotinate D-ribonucleotide: step 1/1. Functionally, catalyzes the reversible adenylation of nicotinate mononucleotide (NaMN) to nicotinic acid adenine dinucleotide (NaAD). This is Probable nicotinate-nucleotide adenylyltransferase from Herminiimonas arsenicoxydans.